We begin with the raw amino-acid sequence, 340 residues long: Probable complex I intermediate-associated protein 30, mitochondrial (340 aa).

The protein belongs to the CIA30 family.

The protein resides in the mitochondrion. Chaperone protein involved in the assembly of the mitochondrial NADH:ubiquinone oxidoreductase complex (complex I). Required for normal growth and reproduction. The polypeptide is Probable complex I intermediate-associated protein 30, mitochondrial (nuaf-1) (Caenorhabditis elegans).